Consider the following 549-residue polypeptide: Cytoplasmic trehalase (549 aa).

Residues Arg-168, 175–176 (WD), Asn-212, 221–223 (RSQ), 292–294 (RDE), and Gly-324 each bind substrate. Residues Asp-326 and Glu-509 each act as proton donor/acceptor in the active site. Position 525 (Glu-525) interacts with substrate.

It belongs to the glycosyl hydrolase 37 family. Monomer.

The protein localises to the cytoplasm. It catalyses the reaction alpha,alpha-trehalose + H2O = alpha-D-glucose + beta-D-glucose. It participates in glycan degradation; trehalose degradation; D-glucose from alpha,alpha-trehalose: step 1/1. In terms of biological role, hydrolyzes trehalose to glucose. Could be involved, in cells returning to low osmolarity conditions, in the utilization of the accumulated cytoplasmic trehalose, which was synthesized in response to high osmolarity. The chain is Cytoplasmic trehalase from Escherichia coli O139:H28 (strain E24377A / ETEC).